Reading from the N-terminus, the 279-residue chain is NAD kinase (279 aa).

The active-site Proton acceptor is Asp57. Residues 57 to 58 (DG), 133 to 134 (NE), Arg159, Asp161, 172 to 177 (TAYNKS), and Ala196 each bind NAD(+).

The protein belongs to the NAD kinase family. A divalent metal cation serves as cofactor.

The protein localises to the cytoplasm. The catalysed reaction is NAD(+) + ATP = ADP + NADP(+) + H(+). In terms of biological role, involved in the regulation of the intracellular balance of NAD and NADP, and is a key enzyme in the biosynthesis of NADP. Catalyzes specifically the phosphorylation on 2'-hydroxyl of the adenosine moiety of NAD to yield NADP. This chain is NAD kinase, found in Streptococcus thermophilus (strain CNRZ 1066).